The following is a 73-amino-acid chain: Translation initiation factor IF-1 (73 aa).

The 73-residue stretch at 1–73 folds into the S1-like domain; the sequence is MANKEELIEF…SKGRITYRAR (73 aa).

This sequence belongs to the IF-1 family. Component of the 30S ribosomal translation pre-initiation complex which assembles on the 30S ribosome in the order IF-2 and IF-3, IF-1 and N-formylmethionyl-tRNA(fMet); mRNA recruitment can occur at any time during PIC assembly.

The protein resides in the cytoplasm. In terms of biological role, one of the essential components for the initiation of protein synthesis. Stabilizes the binding of IF-2 and IF-3 on the 30S subunit to which N-formylmethionyl-tRNA(fMet) subsequently binds. Helps modulate mRNA selection, yielding the 30S pre-initiation complex (PIC). Upon addition of the 50S ribosomal subunit IF-1, IF-2 and IF-3 are released leaving the mature 70S translation initiation complex. This is Translation initiation factor IF-1 from Acinetobacter baylyi (strain ATCC 33305 / BD413 / ADP1).